The primary structure comprises 178 residues: Acireductone dioxygenase (178 aa).

Residues H81, H83, E87, and H126 each contribute to the Fe(2+) site. 4 residues coordinate Ni(2+): H81, H83, E87, and H126.

It belongs to the acireductone dioxygenase (ARD) family. The cofactor is Fe(2+). It depends on Ni(2+) as a cofactor.

Its subcellular location is the cytoplasm. It is found in the nucleus. It catalyses the reaction 1,2-dihydroxy-5-(methylsulfanyl)pent-1-en-3-one + O2 = 4-methylsulfanyl-2-oxobutanoate + formate + 2 H(+). It carries out the reaction 1,2-dihydroxy-5-(methylsulfanyl)pent-1-en-3-one + O2 = 3-(methylsulfanyl)propanoate + CO + formate + 2 H(+). Its pathway is amino-acid biosynthesis; L-methionine biosynthesis via salvage pathway; L-methionine from S-methyl-5-thio-alpha-D-ribose 1-phosphate: step 5/6. Functionally, catalyzes 2 different reactions between oxygen and the acireductone 1,2-dihydroxy-3-keto-5-methylthiopentene (DHK-MTPene) depending upon the metal bound in the active site. Fe-containing acireductone dioxygenase (Fe-ARD) produces formate and 2-keto-4-methylthiobutyrate (KMTB), the alpha-ketoacid precursor of methionine in the methionine recycle pathway. Ni-containing acireductone dioxygenase (Ni-ARD) produces methylthiopropionate, carbon monoxide and formate, and does not lie on the methionine recycle pathway. This Neurospora crassa (strain ATCC 24698 / 74-OR23-1A / CBS 708.71 / DSM 1257 / FGSC 987) protein is Acireductone dioxygenase (adi1).